A 150-amino-acid polypeptide reads, in one-letter code: Catabolic 3-dehydroquinase 2 (150 aa).

Tyr23 acts as the Proton acceptor in catalysis. Asn74, His80, and Asp87 together coordinate substrate. His100 functions as the Proton donor in the catalytic mechanism. Substrate-binding positions include 101-102 and Arg111; that span reads IT.

It belongs to the type-II 3-dehydroquinase family. As to quaternary structure, homododecamer. Adopts a ring-like structure, composed of an arrangement of two hexameric rings stacked on top of one another.

The catalysed reaction is 3-dehydroquinate = 3-dehydroshikimate + H2O. The protein operates within aromatic compound metabolism; 3,4-dihydroxybenzoate biosynthesis; 3,4-dihydroxybenzoate from 3-dehydroquinate: step 1/2. In terms of biological role, is involved in the catabolism of quinate. Allows the utilization of quinate as carbon source via the beta-ketoadipate pathway. This Neosartorya fischeri (strain ATCC 1020 / DSM 3700 / CBS 544.65 / FGSC A1164 / JCM 1740 / NRRL 181 / WB 181) (Aspergillus fischerianus) protein is Catabolic 3-dehydroquinase 2.